The primary structure comprises 70 residues: Large ribosomal subunit protein bL28c (70 aa).

Belongs to the bacterial ribosomal protein bL28 family.

It localises to the plastid. The protein localises to the cyanelle. The polypeptide is Large ribosomal subunit protein bL28c (rpl28) (Cyanophora paradoxa).